We begin with the raw amino-acid sequence, 179 residues long: Transcription factor BOA15 (179 aa).

Its subcellular location is the nucleus. Transcription factor that probably coregulates the gene clusters that mediates the biosynthesis of botcinin acid and its botcinin derivatives, acetate-derived polyketides that contribute to virulence when combined with the sesquiterpene botrydial. Botcinin acid and its derivatives have been shown to induce chlorosis and necrosis during host plant infection, but also have antifungal activities. The polypeptide is Transcription factor BOA15 (Botryotinia fuckeliana (strain B05.10) (Noble rot fungus)).